Here is a 137-residue protein sequence, read N- to C-terminus: Large ribosomal subunit protein uL16 (137 aa).

Positions 1 to 17 (MLSPKRVKFRKRQRGRL) are enriched in basic residues. The tract at residues 1-24 (MLSPKRVKFRKRQRGRLKGTDERG) is disordered.

It belongs to the universal ribosomal protein uL16 family. In terms of assembly, part of the 50S ribosomal subunit.

Its function is as follows. Binds 23S rRNA and is also seen to make contacts with the A and possibly P site tRNAs. This Leptospira borgpetersenii serovar Hardjo-bovis (strain JB197) protein is Large ribosomal subunit protein uL16.